The sequence spans 430 residues: Tol-Pal system protein TolB (430 aa).

The N-terminal stretch at 1–21 (MKQALRVAFGFLILWASVLHA) is a signal peptide.

This sequence belongs to the TolB family. The Tol-Pal system is composed of five core proteins: the inner membrane proteins TolA, TolQ and TolR, the periplasmic protein TolB and the outer membrane protein Pal. They form a network linking the inner and outer membranes and the peptidoglycan layer.

Its subcellular location is the periplasm. Part of the Tol-Pal system, which plays a role in outer membrane invagination during cell division and is important for maintaining outer membrane integrity. TolB occupies a key intermediary position in the Tol-Pal system because it communicates directly with both membrane-embedded components, Pal in the outer membrane and TolA in the inner membrane. This chain is Tol-Pal system protein TolB, found in Shigella flexneri.